The sequence spans 463 residues: SCF E3 ubiquitin ligase complex F-box protein pof2 (463 aa).

Residues 1–42 (MRVPNEVCFNILSYLEADELRCKSTVCTSWRNFIIPTLWEKV) enclose the F-box domain. 10 LRR repeats span residues 145–170 (CPNL…IIKR), 171–196 (CPYL…LSEK), 198–220 (DLIE…SRLV), 225–247 (GLKE…LNLN), 249–271 (ELDA…DIEL), 278–299 (KLNS…LSLT), 304–326 (SLTT…CLLK), 328–353 (CKNI…IAKL), 354–378 (PYLQ…LSGS), and 380–405 (SRNL…LMYN).

As to quaternary structure, part of a SCF E3 ubiquitin ligase complex. Interacts with skp1.

It is found in the mitochondrion. In terms of biological role, involved in substrate recognition in ubiquitin-dependent degradation. This is SCF E3 ubiquitin ligase complex F-box protein pof2 (pof2) from Schizosaccharomyces pombe (strain 972 / ATCC 24843) (Fission yeast).